The following is a 564-amino-acid chain: Putative zinc metalloproteinase in scaA 5'region (564 aa).

The Peptidase M13 domain maps to 1 to 564 (MTRLQDDFYD…KEADFSAEEF (564 aa)). H478 is a binding site for Zn(2+). Residue E479 is part of the active site. Positions 482 and 538 each coordinate Zn(2+). The Proton donor role is filled by D542.

It belongs to the peptidase M13 family. The cofactor is Zn(2+).

This Streptococcus gordonii (strain Challis / ATCC 35105 / BCRC 15272 / CH1 / DL1 / V288) protein is Putative zinc metalloproteinase in scaA 5'region.